The primary structure comprises 456 residues: RuvB-like helicase 1 (456 aa).

Residue 70-77 (GPPGTGKT) coordinates ATP.

It belongs to the RuvB family. Forms homohexameric rings. May form a dodecamer with rept made of two stacked hexameric rings. Component of the chromatin remodeling Ino80 complex.

The protein localises to the nucleus. The enzyme catalyses ATP + H2O = ADP + phosphate + H(+). Acts as a transcriptional coactivator in Wg signaling. In terms of biological role, proposed core component of the chromatin remodeling Ino80 complex which is involved in transcriptional regulation, DNA replication and probably DNA repair. This chain is RuvB-like helicase 1, found in Aedes aegypti (Yellowfever mosquito).